The following is a 70-amino-acid chain: Small ribosomal subunit protein bS21 (70 aa).

Belongs to the bacterial ribosomal protein bS21 family.

In Delftia acidovorans (strain DSM 14801 / SPH-1), this protein is Small ribosomal subunit protein bS21.